We begin with the raw amino-acid sequence, 295 residues long: Ankyrin repeat and SOCS box protein 17 (295 aa).

Residues 146-176 (SGITPLFYVAQTRQSNIFKILLQYGILEREK) form an ANK repeat. Residues 232–295 (LGRRPIISNW…RLQNYLNLEI (64 aa)) enclose the SOCS box domain.

This sequence belongs to the ankyrin SOCS box (ASB) family.

It functions in the pathway protein modification; protein ubiquitination. May be a substrate-recognition component of a SCF-like ECS (Elongin-Cullin-SOCS-box protein) E3 ubiquitin-protein ligase complex which mediates the ubiquitination and subsequent proteasomal degradation of target proteins. The polypeptide is Ankyrin repeat and SOCS box protein 17 (ASB17) (Macaca fascicularis (Crab-eating macaque)).